Reading from the N-terminus, the 250-residue chain is Cholesterol ring-cleaving hydrolase IpdB subunit (250 aa).

It belongs to the 3-oxoacid CoA-transferase subunit B family. As to quaternary structure, heterotetramer composed of 2 IpdA subunits and 2 IpdB subunits.

It catalyses the reaction (3E)-2-(2-carboxylatoethyl)-3-methyl-6-oxocyclohex-1-ene-1-carboxyl-CoA + H2O = 6-methyl-3,7-dioxodecanedioyl-CoA. Its pathway is steroid metabolism; cholesterol degradation. Involved in the final steps of cholesterol and steroid degradation. Opens the last steroid ring of cholesterol by catalyzing the hydrolysis of (3E)-2-(2-carboxylatoethyl)-3-methyl-6-oxocyclohex-1-ene-1-carboxyl-CoA (COCHEA-CoA) to 6-methyl-3,7-dioxodecanedioyl-CoA (MeDODA-CoA). The polypeptide is Cholesterol ring-cleaving hydrolase IpdB subunit (Mycobacterium bovis (strain ATCC BAA-935 / AF2122/97)).